Reading from the N-terminus, the 525-residue chain is NAD(P)H-quinone oxidoreductase chain 4-1 (525 aa).

14 consecutive transmembrane segments (helical) span residues 4–24 (FPWL…IPII), 37–57 (LAVG…GFDL), 89–109 (LIIL…PVTL), 111–131 (PKLF…VFAV), 134–154 (ILLF…ILSI), 167–187 (FILY…TLAF), 210–230 (LLLY…FPLH), 241–261 (TAPA…YALL), 273–293 (AVFA…AAFT), 309–329 (ISHM…GMSG), 330–350 (AMLQ…MVGA), 385–405 (LALP…GFAT), 416–436 (IVVV…LSML), and 462–482 (VFII…PKLI).

This sequence belongs to the complex I subunit 4 family.

Its subcellular location is the cellular thylakoid membrane. It carries out the reaction a plastoquinone + NADH + (n+1) H(+)(in) = a plastoquinol + NAD(+) + n H(+)(out). The enzyme catalyses a plastoquinone + NADPH + (n+1) H(+)(in) = a plastoquinol + NADP(+) + n H(+)(out). Its function is as follows. NDH-1 shuttles electrons from NAD(P)H, via FMN and iron-sulfur (Fe-S) centers, to quinones in the respiratory chain. The immediate electron acceptor for the enzyme in this species is believed to be plastoquinone. Couples the redox reaction to proton translocation (for every two electrons transferred, four hydrogen ions are translocated across the cytoplasmic membrane), and thus conserves the redox energy in a proton gradient. The protein is NAD(P)H-quinone oxidoreductase chain 4-1 (ndhD1) of Synechocystis sp. (strain ATCC 27184 / PCC 6803 / Kazusa).